A 232-amino-acid polypeptide reads, in one-letter code: Large ribosomal subunit protein uL1 (232 aa).

This sequence belongs to the universal ribosomal protein uL1 family. As to quaternary structure, part of the 50S ribosomal subunit.

Functionally, binds directly to 23S rRNA. The L1 stalk is quite mobile in the ribosome, and is involved in E site tRNA release. Its function is as follows. Protein L1 is also a translational repressor protein, it controls the translation of the L11 operon by binding to its mRNA. This is Large ribosomal subunit protein uL1 from Azobacteroides pseudotrichonymphae genomovar. CFP2.